We begin with the raw amino-acid sequence, 292 residues long: Shikimate dehydrogenase (NADP(+)) (292 aa).

Shikimate contacts are provided by residues 25–27 (SKS) and Thr-72. The active-site Proton acceptor is Lys-76. Residues Asn-97 and Asp-113 each coordinate shikimate. NADP(+) is bound by residues 137 to 141 (GAGGA), 161 to 166 (NRTQSK), and Met-230. Position 232 (Tyr-232) interacts with shikimate. Residue Gly-254 coordinates NADP(+).

It belongs to the shikimate dehydrogenase family. In terms of assembly, homodimer.

It catalyses the reaction shikimate + NADP(+) = 3-dehydroshikimate + NADPH + H(+). It functions in the pathway metabolic intermediate biosynthesis; chorismate biosynthesis; chorismate from D-erythrose 4-phosphate and phosphoenolpyruvate: step 4/7. Its function is as follows. Involved in the biosynthesis of the chorismate, which leads to the biosynthesis of aromatic amino acids. Catalyzes the reversible NADPH linked reduction of 3-dehydroshikimate (DHSA) to yield shikimate (SA). This is Shikimate dehydrogenase (NADP(+)) from Shewanella sp. (strain MR-7).